The sequence spans 346 residues: MTPQPRPIPALYCVYILRSTVRHSSLYIGSTPNPPRRLSQHNGVVKGGAVRTSRNSLRPWEMVALVSGFASSTAALKFEWALTNPHTSLHIPSESRLAFSTQRKRNGQPKRPPKSLSSILSNLHLLLSVPSFARWPLRVHFFKRDVHAAWGRWCGKVERELRGSLPVVTDFGEDEGAVVARASASEPLGVVGEGLDGDGGGEEVPTWGIYGLPLDYAPLKEYVAKGQDIFEFERQGSCVVCKEEIDPEEGGLHAVCSNEGCEGVGHLRCWGRYLLKSEEGGGEGAILPVGGRCPRCKGEVHWGTMMKELTLRVRGQKEVENLLKVKRKRAPRKKTAKTKETREEDG.

The region spanning A10–P92 is the GIY-YIG domain. The segment at C238–C296 adopts an SLX1-type zinc-finger fold. Residues K324–A336 show a composition bias toward basic residues. The segment at K324–G346 is disordered. The segment covering K337–G346 has biased composition (basic and acidic residues).

Belongs to the SLX1 family. As to quaternary structure, forms a heterodimer with SLX4. The cofactor is a divalent metal cation.

The protein resides in the nucleus. In terms of biological role, catalytic subunit of the SLX1-SLX4 structure-specific endonuclease that resolves DNA secondary structures generated during DNA repair and recombination. Has endonuclease activity towards branched DNA substrates, introducing single-strand cuts in duplex DNA close to junctions with ss-DNA. The sequence is that of Structure-specific endonuclease subunit SLX1 from Podospora anserina (strain S / ATCC MYA-4624 / DSM 980 / FGSC 10383) (Pleurage anserina).